The sequence spans 343 residues: MIKLTHISKVFQQGSRTITALSDVSLHVPAGQIYGVIGASGAGKSTLIRCANMLERPTSGQVLVDDQDLTTLSEGQLTRARRQIGMIFQHFNLLSSRTVYGNIALPLELDNTSRADIKKRVNELLDLVGLTDKQDAYPANLSGGQKQRVAIARALASNPKVLLCDEATSALDPATTRSILELLKDINRRLGLTILLITHEMDVVKRICDQVAVISEGKLIEKDSVSEVFSHPKTPLAQQFIQSTLHLDIPEDYAKRMSPEPTVDHVPLLKLEFTGKSVDAPLISQAVRRFNIDIGILSSQMDYAGGVKFGVMLAELHGDVQDGLAAIKFLQDHHVKVEVLGYV.

One can recognise an ABC transporter domain in the interval 2–241 (IKLTHISKVF…PKTPLAQQFI (240 aa)). ATP is bound at residue 38-45 (GASGAGKS).

It belongs to the ABC transporter superfamily. Methionine importer (TC 3.A.1.24) family. The complex is composed of two ATP-binding proteins (MetN), two transmembrane proteins (MetI) and a solute-binding protein (MetQ).

The protein resides in the cell inner membrane. The catalysed reaction is L-methionine(out) + ATP + H2O = L-methionine(in) + ADP + phosphate + H(+). The enzyme catalyses D-methionine(out) + ATP + H2O = D-methionine(in) + ADP + phosphate + H(+). Functionally, part of the ABC transporter complex MetNIQ involved in methionine import. Responsible for energy coupling to the transport system. The polypeptide is Methionine import ATP-binding protein MetN 1 (Yersinia pestis bv. Antiqua (strain Antiqua)).